A 140-amino-acid polypeptide reads, in one-letter code: Large ribosomal subunit protein uL16 (140 aa).

Positions 1-14 (MLMPKKVKHRKQMK) are enriched in basic residues. Residues 1-20 (MLMPKKVKHRKQMKGRMSGT) form a disordered region.

The protein belongs to the universal ribosomal protein uL16 family. In terms of assembly, part of the 50S ribosomal subunit.

Functionally, binds 23S rRNA and is also seen to make contacts with the A and possibly P site tRNAs. This chain is Large ribosomal subunit protein uL16, found in Geotalea daltonii (strain DSM 22248 / JCM 15807 / FRC-32) (Geobacter daltonii).